A 437-amino-acid chain; its full sequence is Phosphoethanolamine N-methyltransferase 2 (437 aa).

Residues 186 to 187 (QY) and Tyr-195 each bind N-methylethanolamine phosphate. Residues 204–205 (IS), Gly-232, Asp-254, 281–282 (DA), and Arg-298 each bind S-adenosyl-L-homocysteine. N-methylethanolamine phosphate is bound by residues Tyr-329, Tyr-343, 347 to 349 (RAY), and Lys-415.

The protein belongs to the class I-like SAM-binding methyltransferase superfamily.

The enzyme catalyses N-methylethanolamine phosphate + S-adenosyl-L-methionine = N,N-dimethylethanolamine phosphate + S-adenosyl-L-homocysteine + H(+). The catalysed reaction is N,N-dimethylethanolamine phosphate + S-adenosyl-L-methionine = phosphocholine + S-adenosyl-L-homocysteine + H(+). Its pathway is phospholipid metabolism; phosphatidylcholine biosynthesis; phosphocholine from phosphoethanolamine. With respect to regulation, feedback inhibition by phosphatidylcholine and also by S-adenosylhomocysteine. Functionally, catalyzes the last two methylation reactions in the synthesis of phosphocholine, by converting phospho-monomethylethanolamine (N-methylethanolamine phosphate) into phospho-dimethylethanolamine (N,N-dimethylethanolamine phosphate) and the latter into phosphocholine. Phosphocholine is a precursor for phosphatidylcholine, a major component in membranes and a precursor itself in the production of glycoconjugates secreted by parasitic nematodes to avoid host immune responses. This Caenorhabditis elegans protein is Phosphoethanolamine N-methyltransferase 2.